Consider the following 194-residue polypeptide: dTTP/UTP pyrophosphatase (194 aa).

D68 (proton acceptor) is an active-site residue.

This sequence belongs to the Maf family. YhdE subfamily. Requires a divalent metal cation as cofactor.

It is found in the cytoplasm. The enzyme catalyses dTTP + H2O = dTMP + diphosphate + H(+). The catalysed reaction is UTP + H2O = UMP + diphosphate + H(+). Nucleoside triphosphate pyrophosphatase that hydrolyzes dTTP and UTP. May have a dual role in cell division arrest and in preventing the incorporation of modified nucleotides into cellular nucleic acids. This is dTTP/UTP pyrophosphatase from Clostridioides difficile (strain 630) (Peptoclostridium difficile).